A 105-amino-acid polypeptide reads, in one-letter code: Large ribosomal subunit protein uL24 (105 aa).

Belongs to the universal ribosomal protein uL24 family. As to quaternary structure, part of the 50S ribosomal subunit.

Its function is as follows. One of two assembly initiator proteins, it binds directly to the 5'-end of the 23S rRNA, where it nucleates assembly of the 50S subunit. In terms of biological role, one of the proteins that surrounds the polypeptide exit tunnel on the outside of the subunit. This chain is Large ribosomal subunit protein uL24, found in Pseudothermotoga lettingae (strain ATCC BAA-301 / DSM 14385 / NBRC 107922 / TMO) (Thermotoga lettingae).